A 160-amino-acid chain; its full sequence is MAKQKKHPTGTIAQNKKARHDYFIEHKFEAGLVLAGWEVKSLRASKLQLVDSYVLLKDGEAWLLGSHITPLMTASTHVIADPVRTRKLLLNRRELDKLAAAVQQKGYACVCLSWYWSKHMVKCEIALGKGKKEYDKRDTERERDAGRELQRAVRNKGKED.

A disordered region spans residues lysine 131–aspartate 160.

It belongs to the SmpB family.

It localises to the cytoplasm. Functionally, required for rescue of stalled ribosomes mediated by trans-translation. Binds to transfer-messenger RNA (tmRNA), required for stable association of tmRNA with ribosomes. tmRNA and SmpB together mimic tRNA shape, replacing the anticodon stem-loop with SmpB. tmRNA is encoded by the ssrA gene; the 2 termini fold to resemble tRNA(Ala) and it encodes a 'tag peptide', a short internal open reading frame. During trans-translation Ala-aminoacylated tmRNA acts like a tRNA, entering the A-site of stalled ribosomes, displacing the stalled mRNA. The ribosome then switches to translate the ORF on the tmRNA; the nascent peptide is terminated with the 'tag peptide' encoded by the tmRNA and targeted for degradation. The ribosome is freed to recommence translation, which seems to be the essential function of trans-translation. This chain is SsrA-binding protein, found in Pseudomonas fluorescens (strain Pf0-1).